An 841-amino-acid polypeptide reads, in one-letter code: MRGLNLFQLILALLLSMVAAEDGYDGWLRYAPVSCDLHCQQALPSHVVLLNSTKGSPIETAGRELKAGFQSILSTNLTSRPFQCNSSASILVATLDEYRQRCRDINVPELDPDGFWLQSEGDTVRILGKDARGALYGAYEYLAMVAQRNFSRVAYATSPHAPIRWVNQWDNMDGSIERGYGGASIFFKDGTVVEDMAPVEQYARLLASIRINAIVVNNVNANATLLLPENMKGLSRIADACRPYGVQIGISLNFASPEALGGLNTYDPLDPGVIAWWQNITDSLYTYVPDMAGYLVKADSEGQPGPDTYNRTLSQGANLFARALQPYGGVLMYRAFVYDDNLNESDWKADRAKAAVEYFKDLDGQFEENVVIQIKYGPIDFQVREPTSPLFANLYHTNTAIELEVSQEYLGQQCHLVYLPPLWKTVLDFDLRVDHKPSMVRDIISGQRFNRTLGGWAAVVNVGTNRTWLGSHLAMSNLYAYGRLAWSPTDESEQILEDWTRLTFGQNHHVINTISDMSMTSWPAYENYTGNLGIQTLTDILYTHYGPNPATQDNNGWGQWTRADHDSVGMDRTIWNGTGYTGQYPEEVARVYESLESTPDDLVLWFHHVPWTHRLHSGVTVIQHFYNAHYAGAEAAHGFVRQWESLEGLIDRERYEAMRSRLVYQAGHSIVWRDAINNFYYNMTGIPDVAGRVGHHPWRIEAESMGLDGYQTYTVSPFEAASNTTAIITTSNSTTGTARTSIKAPSGVYDIGVNYYDLYGGQSKWTLSVGDKVVGQWLGDMEHNSLGHTPSIYLGGHSATRITFHGVGIRQGDQLKIVGEANGVEPAPLDYIVLLPPGLVD.

Positions 1 to 20 (MRGLNLFQLILALLLSMVAA) are cleaved as a signal peptide. Residues Asn-51, Asn-76, Asn-85, Asn-149, Asn-222, Asn-279, Asn-310, Asn-343, Asn-450, Asn-465, Asn-527, Asn-576, Asn-682, Asn-723, and Asn-732 are each glycosylated (N-linked (GlcNAc...) asparagine).

This sequence belongs to the glycosyl hydrolase 67 family.

It localises to the secreted. The catalysed reaction is an alpha-D-glucuronoside + H2O = D-glucuronate + an alcohol. In terms of biological role, alpha-glucuronidase involved in the hydrolysis of xylan, a major structural heterogeneous polysaccharide found in plant biomass representing the second most abundant polysaccharide in the biosphere, after cellulose. Releases 4-O-methylglucuronic acid from xylan. The chain is Probable alpha-glucuronidase A (aguA) from Aspergillus niger (strain ATCC MYA-4892 / CBS 513.88 / FGSC A1513).